The sequence spans 155 residues: DNA-binding protein inhibitor ID-1 (155 aa).

A bHLH domain is found at 53–105 (LPALLDEQQVNVLLYDMNGCYSRLKELVPTLPQNRKVSKVEILQHVIDYIRDL). Positions 98-111 (VIDYIRDLQLELNS) match the Nuclear export signal motif.

In terms of assembly, heterodimer with other HLH proteins. Interacts with COPS5, IFI204, GATA4 and NKX2-5. Interacts with CLOCK and BMAL1.

The protein resides in the cytoplasm. It localises to the nucleus. Its function is as follows. Transcriptional regulator (lacking a basic DNA binding domain) which negatively regulates the basic helix-loop-helix (bHLH) transcription factors by forming heterodimers and inhibiting their DNA binding and transcriptional activity. Implicated in regulating a variety of cellular processes, including cellular growth, senescence, differentiation, apoptosis, angiogenesis, and neoplastic transformation. Inhibits skeletal muscle and cardiac myocyte differentiation. Regulates the circadian clock by repressing the transcriptional activator activity of the CLOCK-BMAL1 heterodimer. The polypeptide is DNA-binding protein inhibitor ID-1 (ID1) (Homo sapiens (Human)).